The chain runs to 297 residues: Cyclin-dependent kinase 1 (297 aa).

The Protein kinase domain maps to 4–287 (FEKIEKIGEG…AKDILEHPYF (284 aa)). ATP is bound by residues 10-18 (IGEGTYGVV) and Lys33. At Thr14 the chain carries Phosphothreonine. Tyr15 bears the Phosphotyrosine mark. The active-site Proton acceptor is Asp128. Residue Tyr160 is modified to Phosphotyrosine. Thr161 is subject to Phosphothreonine; by CAK.

This sequence belongs to the protein kinase superfamily. CMGC Ser/Thr protein kinase family. CDC2/CDKX subfamily. Forms a stable but non-covalent complex with a regulatory subunit and with a cyclin. Component of the Frs-CycA-Cdk1 complex composed of Cdk1, CycA and Z600.

It localises to the nucleus. It catalyses the reaction L-seryl-[protein] + ATP = O-phospho-L-seryl-[protein] + ADP + H(+). The catalysed reaction is L-threonyl-[protein] + ATP = O-phospho-L-threonyl-[protein] + ADP + H(+). It carries out the reaction [DNA-directed RNA polymerase] + ATP = phospho-[DNA-directed RNA polymerase] + ADP + H(+). With respect to regulation, phosphorylation at Thr-14 or Tyr-15 inactivates the enzyme, while phosphorylation at Thr-161 activates it. Plays a key role in the control of the eukaryotic cell cycle. Required for entry into S-phase and mitosis. In embryos, promotes the release of Rif1 from chromatin during mid-blastula transition. p34 is a component of the kinase complex that phosphorylates the repetitive C-terminus of RNA polymerase II. In Drosophila melanogaster (Fruit fly), this protein is Cyclin-dependent kinase 1.